Here is a 129-residue protein sequence, read N- to C-terminus: Glycine cleavage system H protein (129 aa).

The region spanning 24-106 is the Lipoyl-binding domain; sequence SYTVGISEHA…FGDGWFFRVM (83 aa). K65 is subject to N6-lipoyllysine.

It belongs to the GcvH family. The glycine cleavage system is composed of four proteins: P, T, L and H. (R)-lipoate serves as cofactor.

Functionally, the glycine cleavage system catalyzes the degradation of glycine. The H protein shuttles the methylamine group of glycine from the P protein to the T protein. This chain is Glycine cleavage system H protein, found in Shewanella woodyi (strain ATCC 51908 / MS32).